A 147-amino-acid polypeptide reads, in one-letter code: 18 kDa antigen 1 (147 aa).

The 111-residue stretch at 21-131 folds into the sHSP domain; that stretch reads TPTRPAVMPM…RPRKIAVGAA (111 aa).

It belongs to the small heat shock protein (HSP20) family.

Functionally, not known. This protein is one of the major immune reactive proteins in mycobacteria. The protein is 18 kDa antigen 1 of Mycobacterium avium.